The chain runs to 1157 residues: Hephaestin (1157 aa).

The first 23 residues, 1–23, serve as a signal peptide directing secretion; that stretch reads MKAGHLLWALLLMHSLCSLPTDG. Plastocyanin-like domains lie at 24–206, 218–366, 370–559, 569–717, 730–902, and 910–1066; these read AIRN…LITC, QRKD…VDSC, PPVE…LLVC, KQKG…VSQC, ASRV…LVIC, and NGGR…SHEE. Over 24-1109 the chain is Extracellular; the sequence is AIRNYYLGIQ…PVKNVEILSS (1086 aa). N-linked (GlcNAc...) asparagine glycosylation is found at Asn49 and Asn54. The Na(+) site is built by Gly70 and Tyr73. 2 residues coordinate Cu(2+): His126 and His128. His126 is a binding site for O2. Ca(2+) is bound by residues Lys134, Asp152, and Asp153. Asn164 carries an N-linked (GlcNAc...) asparagine glycan. Cys180 and Cys206 are joined by a disulfide. 2 residues coordinate Cu(2+): His186 and His188. O2 is bound at residue His186. Asn236 carries an N-linked (GlcNAc...) asparagine glycan. Residue Ser265 participates in Na(+) binding. Residues Cys285 and Cys366 are joined by a disulfide bond. Residues His304, Cys347, and His352 each contribute to the Cu(2+) site. Positions 416, 425, and 428 each coordinate Na(+). Cys533 and Cys559 are joined by a disulfide. Asn587 carries an N-linked (GlcNAc...) asparagine glycan. A Na(+)-binding site is contributed by Ser616. A disulfide bridge connects residues Cys636 and Cys717. Cu(2+) contacts are provided by His655, Cys698, His703, and Met708. 2 N-linked (GlcNAc...) asparagine glycosylation sites follow: Asn713 and Asn757. Positions 768 and 777 each coordinate Na(+). A disulfide bridge links Cys876 with Cys902. N-linked (GlcNAc...) asparagine glycosylation is present at Asn930. The Cu(2+) site is built by His999, His1002, His1004, His1044, Cys1045, His1046, His1050, and Met1055. 2 residues coordinate O2: His1002 and His1004. His1046 lines the O2 pocket. Residues 1110 to 1130 form a helical membrane-spanning segment; it reads ALIAICVVLLLIALALGGVVW. Topologically, residues 1131–1157 are cytoplasmic; it reads YQHRQRKLRRNRRSILDDSFKLLSLKQ. Phosphoserine occurs at positions 1144, 1149, and 1154.

This sequence belongs to the multicopper oxidase family. Part of a complex composed of SLC40A1/ferroportin, TF/transferrin and HEPH/hephaestin that transfers iron from cells to transferrin. It depends on Cu cation as a cofactor. As to expression, highly expressed in small intestine and colon.

It is found in the basolateral cell membrane. It carries out the reaction 4 Fe(2+) + O2 + 4 H(+) = 4 Fe(3+) + 2 H2O. Functionally, plasma membrane ferroxidase that mediates the extracellular conversion of ferrous/Fe(2+) iron into its ferric/Fe(3+) form. Couples ferroportin which specifically exports ferrous/Fe(2+) iron from cells to transferrin that only binds and shuttles extracellular ferric/Fe(3+) iron throughout the body. By helping iron transfer from cells to blood mainly contributes to dietary iron absorption by the intestinal epithelium and more generally regulates iron levels in the body. This Rattus norvegicus (Rat) protein is Hephaestin.